The primary structure comprises 315 residues: DNA-directed RNA polymerase subunit alpha (315 aa).

Positions 1–228 are alpha N-terminal domain (alpha-NTD); that stretch reads MLEIEKPKIE…EHFKLFMTLT (228 aa). The segment at 245-315 is alpha C-terminal domain (alpha-CTD); the sequence is KEKVLEMAIE…LGLSLKQNED (71 aa).

This sequence belongs to the RNA polymerase alpha chain family. In terms of assembly, homodimer. The RNAP catalytic core consists of 2 alpha, 1 beta, 1 beta' and 1 omega subunit. When a sigma factor is associated with the core the holoenzyme is formed, which can initiate transcription.

It carries out the reaction RNA(n) + a ribonucleoside 5'-triphosphate = RNA(n+1) + diphosphate. Functionally, DNA-dependent RNA polymerase catalyzes the transcription of DNA into RNA using the four ribonucleoside triphosphates as substrates. The sequence is that of DNA-directed RNA polymerase subunit alpha from Clostridium kluyveri (strain NBRC 12016).